A 284-amino-acid polypeptide reads, in one-letter code: Bifunctional protein FolD (284 aa).

NADP(+) contacts are provided by residues 165-167 (GRS) and Ser-190.

The protein belongs to the tetrahydrofolate dehydrogenase/cyclohydrolase family. As to quaternary structure, homodimer.

The enzyme catalyses (6R)-5,10-methylene-5,6,7,8-tetrahydrofolate + NADP(+) = (6R)-5,10-methenyltetrahydrofolate + NADPH. It catalyses the reaction (6R)-5,10-methenyltetrahydrofolate + H2O = (6R)-10-formyltetrahydrofolate + H(+). The protein operates within one-carbon metabolism; tetrahydrofolate interconversion. Catalyzes the oxidation of 5,10-methylenetetrahydrofolate to 5,10-methenyltetrahydrofolate and then the hydrolysis of 5,10-methenyltetrahydrofolate to 10-formyltetrahydrofolate. The chain is Bifunctional protein FolD from Streptococcus agalactiae serotype Ia (strain ATCC 27591 / A909 / CDC SS700).